The chain runs to 139 residues: Intrinsically disordered protein, expressed in pharynx 15 (139 aa).

Residues Met-1 to Thr-12 are compositionally biased toward polar residues. The tract at residues Met-1–Ser-98 is disordered. 2 stretches are compositionally biased toward low complexity: residues Thr-13 to Thr-41 and Gln-49 to Ser-98.

The sequence is that of Intrinsically disordered protein, expressed in pharynx 15 from Caenorhabditis elegans.